Consider the following 133-residue polypeptide: Holo-[acyl-carrier-protein] synthase (133 aa).

Asp-8 and Glu-56 together coordinate Mg(2+).

This sequence belongs to the P-Pant transferase superfamily. AcpS family. Mg(2+) serves as cofactor.

The protein resides in the cytoplasm. It carries out the reaction apo-[ACP] + CoA = holo-[ACP] + adenosine 3',5'-bisphosphate + H(+). In terms of biological role, transfers the 4'-phosphopantetheine moiety from coenzyme A to a Ser of acyl-carrier-protein. This chain is Holo-[acyl-carrier-protein] synthase, found in Deinococcus radiodurans (strain ATCC 13939 / DSM 20539 / JCM 16871 / CCUG 27074 / LMG 4051 / NBRC 15346 / NCIMB 9279 / VKM B-1422 / R1).